The primary structure comprises 220 residues: Dual specificity phosphatase 29 (220 aa).

Residues 1–15 show a composition bias toward polar residues; the sequence is MTSGEVKTSLKNAYS. The segment at 1–29 is disordered; that stretch reads MTSGEVKTSLKNAYSSAKRLSPKMEEEGE. The region spanning 54–202 is the Tyrosine-protein phosphatase domain; the sequence is HVNEVWPKLY…LRELDKQLVQ (149 aa). 146–153 serves as a coordination point for substrate; it reads HCVMGRSR. Residue C147 is the Phosphocysteine intermediate of the active site.

Belongs to the protein-tyrosine phosphatase family. Non-receptor class dual specificity subfamily. As to quaternary structure, homodimer. Interacts with PRKAA2.

Its subcellular location is the cytoplasm. The protein localises to the nucleus. The enzyme catalyses O-phospho-L-tyrosyl-[protein] + H2O = L-tyrosyl-[protein] + phosphate. It carries out the reaction O-phospho-L-seryl-[protein] + H2O = L-seryl-[protein] + phosphate. The catalysed reaction is O-phospho-L-threonyl-[protein] + H2O = L-threonyl-[protein] + phosphate. Dual specificity phosphatase able to dephosphorylate phosphotyrosine, phosphoserine and phosphothreonine residues within the same substrate, with a preference for phosphotyrosine as a substrate. Involved in the modulation of intracellular signaling cascades. In skeletal muscle regulates systemic glucose homeostasis by activating, AMPK, an energy sensor protein kinase. Affects MAP kinase signaling though modulation of the MAPK1/2 cascade in skeletal muscle promoting muscle cell differentiation, development and atrophy. This Homo sapiens (Human) protein is Dual specificity phosphatase 29.